We begin with the raw amino-acid sequence, 950 residues long: Protein translocase subunit SecA 1 (950 aa).

Residues Gln-83, 101–105 (GEGKT), and Asp-490 each bind ATP. Positions 864–950 (EGGAGRKNAA…AKPPKSVKKR (87 aa)) are disordered. Basic and acidic residues predominate over residues 873–888 (AAREEAPSRLRAKGIE).

This sequence belongs to the SecA family. In terms of assembly, monomer and homodimer. Part of the essential Sec protein translocation apparatus which comprises SecA, SecYEG and auxiliary proteins SecDF. Other proteins may also be involved.

Its subcellular location is the cell membrane. It localises to the cytoplasm. It catalyses the reaction ATP + H2O + cellular proteinSide 1 = ADP + phosphate + cellular proteinSide 2.. Part of the Sec protein translocase complex. Interacts with the SecYEG preprotein conducting channel. Has a central role in coupling the hydrolysis of ATP to the transfer of proteins into and across the cell membrane, serving as an ATP-driven molecular motor driving the stepwise translocation of polypeptide chains across the membrane. This Mycobacterium ulcerans (strain Agy99) protein is Protein translocase subunit SecA 1.